The primary structure comprises 147 residues: Large ribosomal subunit protein uL13 (147 aa).

This sequence belongs to the universal ribosomal protein uL13 family. Part of the 50S ribosomal subunit.

Its function is as follows. This protein is one of the early assembly proteins of the 50S ribosomal subunit, although it is not seen to bind rRNA by itself. It is important during the early stages of 50S assembly. The sequence is that of Large ribosomal subunit protein uL13 from Mycolicibacterium paratuberculosis (strain ATCC BAA-968 / K-10) (Mycobacterium paratuberculosis).